A 233-amino-acid polypeptide reads, in one-letter code: Large ribosomal subunit protein uL1 (233 aa).

This sequence belongs to the universal ribosomal protein uL1 family. Part of the 50S ribosomal subunit.

Its function is as follows. Binds directly to 23S rRNA. The L1 stalk is quite mobile in the ribosome, and is involved in E site tRNA release. Protein L1 is also a translational repressor protein, it controls the translation of the L11 operon by binding to its mRNA. The chain is Large ribosomal subunit protein uL1 from Thermotoga sp. (strain RQ2).